We begin with the raw amino-acid sequence, 721 residues long: Polyribonucleotide nucleotidyltransferase (721 aa).

The Mg(2+) site is built by D490 and D496. The region spanning 557–623 (PRIISIKINP…RIAGLTKEAK (67 aa)) is the KH domain. An S1 motif domain is found at 625 to 693 (GEEYEGTVVK…DRGKIDLIRP (69 aa)). The tract at residues 693–721 (PELEGKIAPREPRAPRGGGDRGPRPPRRD) is disordered.

This sequence belongs to the polyribonucleotide nucleotidyltransferase family. Requires Mg(2+) as cofactor.

It localises to the cytoplasm. The enzyme catalyses RNA(n+1) + phosphate = RNA(n) + a ribonucleoside 5'-diphosphate. In terms of biological role, involved in mRNA degradation. Catalyzes the phosphorolysis of single-stranded polyribonucleotides processively in the 3'- to 5'-direction. The chain is Polyribonucleotide nucleotidyltransferase from Deinococcus deserti (strain DSM 17065 / CIP 109153 / LMG 22923 / VCD115).